The primary structure comprises 275 residues: Protein unc-50 homolog (275 aa).

Positions 1–26 are enriched in polar residues; it reads MTQYSHVKYTQSPTPSVVSGYSSASR. The segment at 1–39 is disordered; sequence MTQYSHVKYTQSPTPSVVSGYSSASRLHSPLPPPANHRR. At 1 to 99 the chain is on the cytoplasmic side; sequence MTQYSHVKYT…TKSQFARDDP (99 aa). A helical membrane pass occupies residues 100 to 120; it reads AFLVLLVVCLCVTSLGFAYVL. Residues 121-129 are Lumenal-facing; the sequence is GLSFWQSIS. Residues 130–150 traverse the membrane as a helical segment; that stretch reads FIFYVVFVDCIFVGIIIASFF. Residues 151-178 lie on the Cytoplasmic side of the membrane; that stretch reads WAVTNRYLRTNSLEPDIEWGYAFDVHLN. A helical transmembrane segment spans residues 179–199; it reads AFFPPLMLLHFIQLFFYNWLI. Over 200–207 the chain is Lumenal; that stretch reads SQTWFISR. A helical transmembrane segment spans residues 208-228; it reads FLGNTFWLMGMGYYVYITFLG. At 229-239 the chain is on the cytoplasmic side; the sequence is YNCIPHLKNTR. The helical transmembrane segment at 240–260 threads the bilayer; that stretch reads IILIALPIIFLLFLVVTIIGW. The Lumenal segment spans residues 261 to 275; the sequence is NATISFVNFYKYRVY.

Belongs to the unc-50 family.

Its subcellular location is the golgi apparatus membrane. Functionally, required for cell surface expression of acetylcholine receptors. The chain is Protein unc-50 homolog from Drosophila melanogaster (Fruit fly).